Here is an 884-residue protein sequence, read N- to C-terminus: Chitin synthase E (884 aa).

Disordered regions lie at residues 1–58 (MGTP…PAVS) and 73–108 (AVFA…SRAG). Polar residues-rich tracts occupy residues 37–48 (QSLLERNNSSHY) and 84–93 (EAASENTFRA). An N-linked (GlcNAc...) asparagine glycan is attached at Asn-44. The span at 95–105 (SNGDKASREGS) shows a compositional bias: basic and acidic residues. The N-linked (GlcNAc...) asparagine glycan is linked to Asn-301. A run of 7 helical transmembrane segments spans residues 513 to 532 (WLNG…GRIY), 556 to 576 (IMTW…MDLV), 597 to 617 (IVNN…FIMA), 635 to 655 (YFSL…VGAF), 681 to 701 (GGIV…ASVL), 708 to 728 (IITS…ILMV), and 812 to 832 (VLVC…TATG). The N-linked (GlcNAc...) asparagine glycan is linked to Asn-840. A helical transmembrane segment spans residues 852–872 (VILWITAGLSLFRFIGSLWFL).

This sequence belongs to the chitin synthase family. Class III subfamily.

It localises to the cell membrane. It catalyses the reaction [(1-&gt;4)-N-acetyl-beta-D-glucosaminyl](n) + UDP-N-acetyl-alpha-D-glucosamine = [(1-&gt;4)-N-acetyl-beta-D-glucosaminyl](n+1) + UDP + H(+). In terms of biological role, polymerizes chitin, a structural polymer of the cell wall and septum, by transferring the sugar moiety of UDP-GlcNAc to the non-reducing end of the growing chitin polymer. Plays an important role in septal growth or maintenance. Mediates colony spore formation. ChsE and chsD seem to play a functionally redundant role in lateral cell wall chitin synthesis. Involved in resistance to echinocandins. This Aspergillus niger (strain ATCC MYA-4892 / CBS 513.88 / FGSC A1513) protein is Chitin synthase E.